Consider the following 436-residue polypeptide: Histidinol dehydrogenase (436 aa).

Tyr-136, Gln-198, and Asn-221 together coordinate NAD(+). Ser-244, Gln-266, and His-269 together coordinate substrate. Zn(2+) contacts are provided by Gln-266 and His-269. Active-site proton acceptor residues include Glu-334 and His-335. Positions 335, 368, 422, and 427 each coordinate substrate. Zn(2+) is bound at residue Asp-368. His-427 is a binding site for Zn(2+).

It belongs to the histidinol dehydrogenase family. It depends on Zn(2+) as a cofactor.

It carries out the reaction L-histidinol + 2 NAD(+) + H2O = L-histidine + 2 NADH + 3 H(+). Its pathway is amino-acid biosynthesis; L-histidine biosynthesis; L-histidine from 5-phospho-alpha-D-ribose 1-diphosphate: step 9/9. Functionally, catalyzes the sequential NAD-dependent oxidations of L-histidinol to L-histidinaldehyde and then to L-histidine. This Dehalococcoides mccartyi (strain ATCC BAA-2266 / KCTC 15142 / 195) (Dehalococcoides ethenogenes (strain 195)) protein is Histidinol dehydrogenase.